The following is a 234-amino-acid chain: MRLVQLSRHSIAFPSPEGALREPNGLLALGGDLSPARLLMAYQHGIFPWFSPGDPILWWSPDPRAVLWPEKFHLSRSMKRFHNASPYRVTLNYAFDRVIDGCANHRDEGTWITRGIEEAYRRLHELGHAHSIEVWRDRELVGGMYGVSQGALFCGESMFSRQENASKTALLVFCAEFTRHGGKLIDCQVLNSHTASLGAIEIPRRDYLDHLAALRQQPLASRFWVPRTLFLPRK.

It belongs to the L/F-transferase family.

It localises to the cytoplasm. The catalysed reaction is N-terminal L-lysyl-[protein] + L-leucyl-tRNA(Leu) = N-terminal L-leucyl-L-lysyl-[protein] + tRNA(Leu) + H(+). The enzyme catalyses N-terminal L-arginyl-[protein] + L-leucyl-tRNA(Leu) = N-terminal L-leucyl-L-arginyl-[protein] + tRNA(Leu) + H(+). It carries out the reaction L-phenylalanyl-tRNA(Phe) + an N-terminal L-alpha-aminoacyl-[protein] = an N-terminal L-phenylalanyl-L-alpha-aminoacyl-[protein] + tRNA(Phe). Its function is as follows. Functions in the N-end rule pathway of protein degradation where it conjugates Leu, Phe and, less efficiently, Met from aminoacyl-tRNAs to the N-termini of proteins containing an N-terminal arginine or lysine. The polypeptide is Leucyl/phenylalanyl-tRNA--protein transferase (Salmonella agona (strain SL483)).